A 300-amino-acid polypeptide reads, in one-letter code: Large ribosomal subunit protein bL9m (300 aa).

It belongs to the bacterial ribosomal protein bL9 family. Component of the mitochondrial large ribosomal subunit (mt-LSU). Mature N.crassa 74S mitochondrial ribosomes consist of a small (37S) and a large (54S) subunit. The 37S small subunit contains a 16S ribosomal RNA (16S mt-rRNA) and 32 different proteins. The 54S large subunit contains a 23S rRNA (23S mt-rRNA) and 42 different proteins.

It localises to the mitochondrion. Its function is as follows. Component of the mitochondrial ribosome (mitoribosome), a dedicated translation machinery responsible for the synthesis of mitochondrial genome-encoded proteins, including at least some of the essential transmembrane subunits of the mitochondrial respiratory chain. The mitoribosomes are attached to the mitochondrial inner membrane and translation products are cotranslationally integrated into the membrane. In Neurospora crassa (strain ATCC 24698 / 74-OR23-1A / CBS 708.71 / DSM 1257 / FGSC 987), this protein is Large ribosomal subunit protein bL9m (mrpl50).